A 156-amino-acid polypeptide reads, in one-letter code: NAD(P)H-quinone oxidoreductase subunit N (156 aa).

Belongs to the complex I NdhN subunit family. In terms of assembly, NDH-1 can be composed of about 15 different subunits; different subcomplexes with different compositions have been identified which probably have different functions.

The protein localises to the cellular thylakoid membrane. The catalysed reaction is a plastoquinone + NADH + (n+1) H(+)(in) = a plastoquinol + NAD(+) + n H(+)(out). It catalyses the reaction a plastoquinone + NADPH + (n+1) H(+)(in) = a plastoquinol + NADP(+) + n H(+)(out). In terms of biological role, NDH-1 shuttles electrons from an unknown electron donor, via FMN and iron-sulfur (Fe-S) centers, to quinones in the respiratory and/or the photosynthetic chain. The immediate electron acceptor for the enzyme in this species is believed to be plastoquinone. Couples the redox reaction to proton translocation, and thus conserves the redox energy in a proton gradient. Cyanobacterial NDH-1 also plays a role in inorganic carbon-concentration. The polypeptide is NAD(P)H-quinone oxidoreductase subunit N (Prochlorococcus marinus subsp. pastoris (strain CCMP1986 / NIES-2087 / MED4)).